We begin with the raw amino-acid sequence, 415 residues long: L-cysteine:1D-myo-inositol 2-amino-2-deoxy-alpha-D-glucopyranoside ligase (415 aa).

Cysteine 43 contacts Zn(2+). Residues 43–46 (CGIT), threonine 58, and 81–83 (NVT) contribute to the L-cysteinyl-5'-AMP site. The 'HIGH' region signature appears at 45–55 (ITPYDATHLGH). The short motif at 188-193 (ERGGDP) is the 'ERGGDP' region element. Tryptophan 229 serves as a coordination point for L-cysteinyl-5'-AMP. Cysteine 233 contributes to the Zn(2+) binding site. 251 to 253 (GSD) provides a ligand contact to L-cysteinyl-5'-AMP. Histidine 258 provides a ligand contact to Zn(2+). Valine 285 provides a ligand contact to L-cysteinyl-5'-AMP. The short motif at 291–295 (KMSKS) is the 'KMSKS' region element.

The protein belongs to the class-I aminoacyl-tRNA synthetase family. MshC subfamily. Monomer. Requires Zn(2+) as cofactor.

The catalysed reaction is 1D-myo-inositol 2-amino-2-deoxy-alpha-D-glucopyranoside + L-cysteine + ATP = 1D-myo-inositol 2-(L-cysteinylamino)-2-deoxy-alpha-D-glucopyranoside + AMP + diphosphate + H(+). In terms of biological role, catalyzes the ATP-dependent condensation of GlcN-Ins and L-cysteine to form L-Cys-GlcN-Ins. The sequence is that of L-cysteine:1D-myo-inositol 2-amino-2-deoxy-alpha-D-glucopyranoside ligase from Cellulomonas flavigena (strain ATCC 482 / DSM 20109 / BCRC 11376 / JCM 18109 / NBRC 3775 / NCIMB 8073 / NRS 134).